The chain runs to 254 residues: Type III pantothenate kinase (254 aa).

Residue 6 to 13 participates in ATP binding; the sequence is DVGNSNIV. Residues Y100 and 107–110 each bind substrate; that span reads GADR. Residue D109 is the Proton acceptor of the active site. D129 serves as a coordination point for K(+). T132 provides a ligand contact to ATP. T184 lines the substrate pocket.

Belongs to the type III pantothenate kinase family. As to quaternary structure, homodimer. It depends on NH4(+) as a cofactor. K(+) is required as a cofactor.

The protein resides in the cytoplasm. It catalyses the reaction (R)-pantothenate + ATP = (R)-4'-phosphopantothenate + ADP + H(+). It participates in cofactor biosynthesis; coenzyme A biosynthesis; CoA from (R)-pantothenate: step 1/5. Catalyzes the phosphorylation of pantothenate (Pan), the first step in CoA biosynthesis. This chain is Type III pantothenate kinase, found in Geobacter sp. (strain M21).